The primary structure comprises 430 residues: Mitochondrial distribution and morphology protein 10 (430 aa).

Polar residues predominate over residues 215–234 (SSSAMNPPSGTSASETNGSG). Disordered stretches follow at residues 215-237 (SSSA…GPSV) and 339-393 (LGAN…GPKE).

This sequence belongs to the MDM10 family. As to quaternary structure, component of the ER-mitochondria encounter structure (ERMES) or MDM complex, composed of MMM1, MDM10, MDM12 and MDM34. Associates with the mitochondrial outer membrane sorting assembly machinery SAM(core) complex.

The protein localises to the mitochondrion outer membrane. Functionally, component of the ERMES/MDM complex, which serves as a molecular tether to connect the endoplasmic reticulum and mitochondria. Components of this complex are involved in the control of mitochondrial shape and protein biogenesis and may function in phospholipid exchange. MDM10 is involved in the late assembly steps of the general translocase of the mitochondrial outer membrane (TOM complex). Functions in the TOM40-specific route of the assembly of outer membrane beta-barrel proteins, including the association of TOM40 with the receptor TOM22 and small TOM proteins. Can associate with the SAM(core) complex as well as the MDM12-MMM1 complex, both involved in late steps of the major beta-barrel assembly pathway, that is responsible for biogenesis of all outer membrane beta-barrel proteins. May act as a switch that shuttles between both complexes and channels precursor proteins into the TOM40-specific pathway. Plays a role in mitochondrial morphology and in the inheritance of mitochondria. This Chaetomium globosum (strain ATCC 6205 / CBS 148.51 / DSM 1962 / NBRC 6347 / NRRL 1970) (Soil fungus) protein is Mitochondrial distribution and morphology protein 10.